Reading from the N-terminus, the 704-residue chain is MTRQVALDKVRNIGIMAHIDAGKTTTTERILYYTGRLHRMGEVHDGGATMDWMDQEKERGITITSAATTCFWAPKFGNYEGEKHRINIIDTPGHVDFTVEVERSLRVLDGAVALFCAVGGVEPQSETVWRQANKYGVPRVAYVNKMDRTGADFFDTVKSIKERLSANPVPIQIPIGEGEIFAGFVDLIRMKGIIYDKEDGSTYEEVAIPHDLENEARTWRINMLEAVSEVDESLLEKYLNGEDITEMEIRKVLRQATLKVSIIPVLCGSSFKNKGVQFMLDAVVDYLASPLDDGEVEGHHPRTEEPVVRHPNDDEPFAGLAFKIATDPFVGKLTFFRVYSGTLKAGSYVLNSITGKKERIGRVLQMHSNKREDIDCVYAGDIAAAVGLKEVRTGDTLCDENNPVVLEKMVFPEPVIQIAIEPKTKADSDKLGMSLAKLAEEDPTFRVKTDDETGQTLIAGMGELHLEILVDRLKREFKVEANVGQPQVAYRETIRAKVDFEGKFVRQSGGKGQFGLVNLTVEPLEEGKGYEFVDAVKGGVIPREYIPAVNAGIQQAMKDGVVAGYPMQDIKVTLYDGKYHDVDSSEMAFKIAGSIGFKGGARKASPVLLEPIMKVEVVTPEEYLGDVMGDLSSRRGHIEGMGQRAGAQFVHAKVPLSAMFGYSTDLRSMTQGRANYSMEFESYREVPKNIADALQDKRVTKDDY.

The region spanning 8–291 (DKVRNIGIMA…AVVDYLASPL (284 aa)) is the tr-type G domain. Residues 17–24 (AHIDAGKT), 90–94 (DTPGH), and 144–147 (NKMD) each bind GTP.

This sequence belongs to the TRAFAC class translation factor GTPase superfamily. Classic translation factor GTPase family. EF-G/EF-2 subfamily.

It is found in the cytoplasm. In terms of biological role, catalyzes the GTP-dependent ribosomal translocation step during translation elongation. During this step, the ribosome changes from the pre-translocational (PRE) to the post-translocational (POST) state as the newly formed A-site-bound peptidyl-tRNA and P-site-bound deacylated tRNA move to the P and E sites, respectively. Catalyzes the coordinated movement of the two tRNA molecules, the mRNA and conformational changes in the ribosome. The polypeptide is Elongation factor G (Chlorobium luteolum (strain DSM 273 / BCRC 81028 / 2530) (Pelodictyon luteolum)).